A 663-amino-acid chain; its full sequence is UvrABC system protein B (663 aa).

A Helicase ATP-binding domain is found at 31–271 (DNIESGEKAQ…EQSISKIQAE (241 aa)). Residue 44–51 (GATGTGKT) coordinates ATP. The Beta-hairpin signature appears at 97 to 120 (YYDYYQPEAYVPSSDTYIEKDSSV). One can recognise a Helicase C-terminal domain in the interval 435-601 (QMDDLLGEIN…TIKKDIRDLI (167 aa)). The 36-residue stretch at 627-662 (QEAIKQLQKNMQEAAELLDFELAAQLRDLILELKAI) folds into the UVR domain.

It belongs to the UvrB family. As to quaternary structure, forms a heterotetramer with UvrA during the search for lesions. Interacts with UvrC in an incision complex.

The protein resides in the cytoplasm. Its function is as follows. The UvrABC repair system catalyzes the recognition and processing of DNA lesions. A damage recognition complex composed of 2 UvrA and 2 UvrB subunits scans DNA for abnormalities. Upon binding of the UvrA(2)B(2) complex to a putative damaged site, the DNA wraps around one UvrB monomer. DNA wrap is dependent on ATP binding by UvrB and probably causes local melting of the DNA helix, facilitating insertion of UvrB beta-hairpin between the DNA strands. Then UvrB probes one DNA strand for the presence of a lesion. If a lesion is found the UvrA subunits dissociate and the UvrB-DNA preincision complex is formed. This complex is subsequently bound by UvrC and the second UvrB is released. If no lesion is found, the DNA wraps around the other UvrB subunit that will check the other stand for damage. The sequence is that of UvrABC system protein B from Streptococcus equi subsp. zooepidemicus (strain MGCS10565).